A 242-amino-acid polypeptide reads, in one-letter code: Small ribosomal subunit protein uS2 (242 aa).

The protein belongs to the universal ribosomal protein uS2 family.

This is Small ribosomal subunit protein uS2 from Vibrio vulnificus (strain CMCP6).